We begin with the raw amino-acid sequence, 132 residues long: Small ribosomal subunit protein uS8 (132 aa).

This sequence belongs to the universal ribosomal protein uS8 family. Part of the 30S ribosomal subunit. Contacts proteins S5 and S12.

One of the primary rRNA binding proteins, it binds directly to 16S rRNA central domain where it helps coordinate assembly of the platform of the 30S subunit. In Xanthomonas campestris pv. campestris (strain 8004), this protein is Small ribosomal subunit protein uS8.